The sequence spans 268 residues: Energy-coupling factor transporter transmembrane protein EcfT (268 aa).

Helical transmembrane passes span 26 to 46 (ILAV…LSYG), 47 to 67 (ILIG…GLLL), 73 to 93 (LWII…GEAL), 116 to 136 (LVLL…IVLT), 151 to 171 (VPAH…PTLL), and 246 to 266 (ALTG…RWGI).

It belongs to the energy-coupling factor EcfT family. Forms a stable energy-coupling factor (ECF) transporter complex composed of 2 membrane-embedded substrate-binding proteins (S component), 2 ATP-binding proteins (A component) and 2 transmembrane proteins (T component). May be able to interact with more than 1 S component at a time.

It localises to the cell membrane. Transmembrane (T) component of an energy-coupling factor (ECF) ABC-transporter complex. Unlike classic ABC transporters this ECF transporter provides the energy necessary to transport a number of different substrates. The polypeptide is Energy-coupling factor transporter transmembrane protein EcfT (Acidaminococcus fermentans (strain ATCC 25085 / DSM 20731 / CCUG 9996 / CIP 106432 / VR4)).